Consider the following 249-residue polypeptide: Domoic acid biosynthesis cluster protein B (249 aa).

Functionally, unknown function: part of the gene cluster that mediates the biosynthesis of domoic acid (DA) and derivatives, natural products with neurochemical activity acting as ionotropic glutamate receptor (iGluR) agonists, thus being neurotoxins causing amnesic shellfish poisoning (ASP). This chain is Domoic acid biosynthesis cluster protein B, found in Pseudo-nitzschia multiseries (Marine planktonic diatom).